Consider the following 315-residue polypeptide: Transcriptional regulator protein Pur-beta (315 aa).

The tract at residues 1-39 (MADGDSGSERGGGGPGSFQPAPRGGGGPGGEQETQELAS) is disordered. The residue at position 2 (Ala2) is an N-acetylalanine. Phosphoserine occurs at positions 6 and 8. Position 23 is an omega-N-methylarginine (Arg23). The DNA-binding stretch occupies residues 28–254 (PGGEQETQEL…GVFLRVSEVK (227 aa)). Thr34 carries the phosphothreonine modification. The residue at position 104 (Ser104) is a Phosphoserine. Arg155 bears the Omega-N-methylarginine mark. Residues 200–220 (DDELAGGPGGGAGGPGGGLYG) form a disordered region. The segment covering 205-219 (GGPGGGAGGPGGGLY) has biased composition (gly residues). Lys270 carries the post-translational modification N6-acetyllysine. Positions 288–298 (RQRDKLYERRG) are enriched in basic and acidic residues. The disordered stretch occupies residues 288–315 (RQRDKLYERRGGGSGGGDESEGEEVDED). At Arg297 the chain carries Omega-N-methylarginine. A phosphoserine mark is found at Ser301 and Ser307. A compositionally biased stretch (acidic residues) spans 305–315 (DESEGEEVDED).

This sequence belongs to the PUR DNA-binding protein family. As to quaternary structure, homodimer, heterodimer with PURA and heterotrimer with PURA and YBX1/Y-box protein 1. Interacts with MYOCD and SRF. In terms of tissue distribution, expressed in muscle cells and in the liver.

Its subcellular location is the nucleus. In terms of biological role, transcriptional regulator which can act as an activator or a repressor. Represses the transcription of ACTA2 in fibroblasts and smooth muscle cells via its ability to interact with the purine-rich strand of a MCAT- containing element in the 5' flanking region of the gene. Represses the transcription of MYOCD, capable of repressing all isoforms of MYOCD but the magnitude of the repressive effects is most notable for the SMC- specific isoforms. Promotes hepatic glucose production by activating the transcription of ADCY6, leading to cAMP accumulation, increased PKA activity, CREB activation, and increased transcription of PCK1 and G6PC genes. Has capacity to bind repeated elements in single-stranded DNA such as the purine-rich single strand of the PUR element located upstream of the MYC gene. Participates in transcriptional and translational regulation of alpha-MHC expression in cardiac myocytes by binding to the purine-rich negative regulatory (PNR) element. Modulates constitutive liver galectin-3 gene transcription by binding to its promoter. May play a role in the dendritic transport of a subset of mRNAs. The sequence is that of Transcriptional regulator protein Pur-beta (Purb) from Rattus norvegicus (Rat).